The following is a 345-amino-acid chain: RDS/peripherin-like protein xRDS36 (345 aa).

The Cytoplasmic portion of the chain corresponds to 1 to 24 (MVLFKAKFSFQRRVKLAQTLWLLS). Residues 25–43 (WLSVLVGCLTFGMGIFLKV) traverse the membrane as a helical segment. Residues 44–61 (QLWIHNEVMDNTTAHAVP) are Lumenal-facing. Residue asparagine 54 is glycosylated (N-linked (GlcNAc...) asparagine). Residues 62–80 (NTVITAGLVGILLGYFAGK) form a helical membrane-spanning segment. Residues 81–99 (ISQASMDLTKYQRWKSFMM) are Cytoplasmic-facing. A helical transmembrane segment spans residues 100 to 123 (PFFFLAILSCIVCLAALVLSVALR). Residues 124-264 (GTLEESLKIG…LGYYTGIMAT (141 aa)) are Lumenal-facing. Residue asparagine 229 is glycosylated (N-linked (GlcNAc...) asparagine). Residues 265–290 (NGAAVTLSFLLQASVLVSLRYVQTSM) traverse the membrane as a helical segment. At 291–345 (DKIRDPDDVEADTEGFLLEKGVMETVNSSLEKIKDLFKSNQVETAEGGGEGAAGS) the chain is on the cytoplasmic side.

The protein belongs to the PRPH2/ROM1 family. In terms of assembly, homodimer; disulfide-linked. In terms of tissue distribution, rod specific.

The protein localises to the membrane. This chain is RDS/peripherin-like protein xRDS36 (rds36), found in Xenopus laevis (African clawed frog).